Reading from the N-terminus, the 155-residue chain is MIRVGLGFDSHEFREGIPLRIGGLTIPHTHGLSGHSDGDVLLHAITDALLGAVAAGDIGAFFPPSDPKWKGANSVVFIEEAMRHIETAGYRVGNVDCSLVLNAPKIGPHAKAIQESVAKLLKIEPTAVGIKAKTPEGLNLDGTALAHVVVLLEKR.

Residues aspartate 9 and histidine 11 each contribute to the a divalent metal cation site. 4-CDP-2-C-methyl-D-erythritol 2-phosphate contacts are provided by residues 9-11 and 35-36; these read DSH and HS. Histidine 43 serves as a coordination point for a divalent metal cation. Residue 57-59 coordinates 4-CDP-2-C-methyl-D-erythritol 2-phosphate; the sequence is DIG.

Belongs to the IspF family. Homotrimer. A divalent metal cation serves as cofactor.

It carries out the reaction 4-CDP-2-C-methyl-D-erythritol 2-phosphate = 2-C-methyl-D-erythritol 2,4-cyclic diphosphate + CMP. It participates in isoprenoid biosynthesis; isopentenyl diphosphate biosynthesis via DXP pathway; isopentenyl diphosphate from 1-deoxy-D-xylulose 5-phosphate: step 4/6. Functionally, involved in the biosynthesis of isopentenyl diphosphate (IPP) and dimethylallyl diphosphate (DMAPP), two major building blocks of isoprenoid compounds. Catalyzes the conversion of 4-diphosphocytidyl-2-C-methyl-D-erythritol 2-phosphate (CDP-ME2P) to 2-C-methyl-D-erythritol 2,4-cyclodiphosphate (ME-CPP) with a corresponding release of cytidine 5-monophosphate (CMP). This is 2-C-methyl-D-erythritol 2,4-cyclodiphosphate synthase from Koribacter versatilis (strain Ellin345).